Reading from the N-terminus, the 259-residue chain is MDDYAVLSDTELAAVLRQYNIPHGPIVGSTRKLYEKKIFEYETQRRRLLPPNSSSSSFSYQFSDLDSAAVDSDMYDLPKKEDALLYQSKDYNDDYYEESYLTTKTYGEPESVGMSKSFRQPGTSLVDADTFHHQVRDDIFSSLEEEGKDRERLIYGQDSAYQSIAHYRPISNVSRSSLGLSYYPTSSTSSVSSSSSSPSSWLTRRAIRPEKQAPAAALGQDRQVPLWGQLLLFLVFAAFLLFVYYSIQAEEGNPFWMDP.

Met-1 is subject to N-acetylmethionine. Positions 1–45 (MDDYAVLSDTELAAVLRQYNIPHGPIVGSTRKLYEKKIFEYETQR) constitute an LEM domain. Residues Ser-8, Ser-29, Ser-54, Ser-72, Ser-88, Ser-99, Ser-141, and Ser-142 each carry the phosphoserine modification. Residues 46 to 223 (RRLLPPNSSS…PAAALGQDRQ (178 aa)) are interaction with F-actin. Tyr-161 bears the Phosphotyrosine mark. Residues 168–187 (RPISNVSRSSLGLSYYPTSS) are interaction with CTNNB1. Phosphoserine occurs at positions 171, 174, and 176. The chain crosses the membrane as a helical span at residues 224-244 (VPLWGQLLLFLVFAAFLLFVY).

Interacts with lamins A and C, BANF1, GMCL, BCLAF1 and YTHDC1/YT521. Interacts with TMEM43; the interaction retains emerin in the inner nuclear membrane. Interacts with ACTB, SPTAN1, F-actin, CTNNB1 and beta-tubulin. Interacts with SUN1 and SUN2. Interacts with TMEM201. Interacts with NEMP1. In terms of tissue distribution, in the ovary, highest expression is seen in primordial follicle oocytes (at protein level). Detected in embryonic fibroblasts, skeletal muscle, heart muscle and tongue epithelium (at protein level). Widely expressed.

It is found in the nucleus inner membrane. The protein localises to the nucleus outer membrane. In terms of biological role, stabilizes and promotes the formation of a nuclear actin cortical network. Stimulates actin polymerization in vitro by binding and stabilizing the pointed end of growing filaments. Inhibits beta-catenin activity by preventing its accumulation in the nucleus. Acts by influencing the nuclear accumulation of beta-catenin through a CRM1-dependent export pathway. Links centrosomes to the nuclear envelope via a microtubule association. Required for proper localization of non-farnesylated prelamin-A/C. Together with NEMP1, contributes to nuclear envelope stiffness in germ cells. This chain is Emerin (Emd), found in Mus musculus (Mouse).